The sequence spans 577 residues: CTP synthase (577 aa).

Residues 1-268 (MDPAFIFITG…GALLCERLRL (268 aa)) are amidoligase domain. Ser14 contributes to the CTP binding site. Ser14 serves as a coordination point for UTP. 15–20 (SLGKGI) is a binding site for ATP. Tyr55 is an L-glutamine binding site. Asp72 contributes to the ATP binding site. 2 residues coordinate Mg(2+): Asp72 and Glu142. Residues 149–151 (DIE), 189–194 (KTKPLQ), and Lys225 contribute to the CTP site. UTP-binding positions include 189–194 (KTKPLQ) and Lys225. The region spanning 333–575 (TVALVGKYVS…VAAGLERKDS (243 aa)) is the Glutamine amidotransferase type-1 domain. Gly396 serves as a coordination point for L-glutamine. Cys423 functions as the Nucleophile; for glutamine hydrolysis in the catalytic mechanism. L-glutamine contacts are provided by residues 424-427 (LGMQ), Glu447, and Arg503. Catalysis depends on residues His548 and Glu550.

It belongs to the CTP synthase family. As to quaternary structure, homotetramer.

It catalyses the reaction UTP + L-glutamine + ATP + H2O = CTP + L-glutamate + ADP + phosphate + 2 H(+). The enzyme catalyses L-glutamine + H2O = L-glutamate + NH4(+). It carries out the reaction UTP + NH4(+) + ATP = CTP + ADP + phosphate + 2 H(+). It functions in the pathway pyrimidine metabolism; CTP biosynthesis via de novo pathway; CTP from UDP: step 2/2. With respect to regulation, allosterically activated by GTP, when glutamine is the substrate; GTP has no effect on the reaction when ammonia is the substrate. The allosteric effector GTP functions by stabilizing the protein conformation that binds the tetrahedral intermediate(s) formed during glutamine hydrolysis. Inhibited by the product CTP, via allosteric rather than competitive inhibition. In terms of biological role, catalyzes the ATP-dependent amination of UTP to CTP with either L-glutamine or ammonia as the source of nitrogen. Regulates intracellular CTP levels through interactions with the four ribonucleotide triphosphates. The polypeptide is CTP synthase (Treponema pallidum (strain Nichols)).